The following is a 652-amino-acid chain: Ethylmalonyl-CoA mutase (652 aa).

The B12-binding domain occupies P519–T647. H532 is an adenosylcob(III)alamin binding site.

Belongs to the methylmalonyl-CoA mutase family. In terms of assembly, homodimer. It depends on adenosylcob(III)alamin as a cofactor.

The enzyme catalyses (2R)-ethylmalonyl-CoA = (2S)-methylsuccinyl-CoA. Its function is as follows. Radical enzyme that catalyzes the transformation of (2R)-ethylmalonyl-CoA to (2S)-methylsuccinyl-CoA. Is involved in the ethylmalonyl-CoA pathway for acetyl-CoA assimilation required for R.sphaeroides growth on acetate as sole carbon source. Is highly specific for its substrate, ethylmalonyl-CoA, and accepts methylmalonyl-CoA only at 0.2% relative activity. The protein is Ethylmalonyl-CoA mutase of Cereibacter sphaeroides (strain ATCC 17023 / DSM 158 / JCM 6121 / CCUG 31486 / LMG 2827 / NBRC 12203 / NCIMB 8253 / ATH 2.4.1.) (Rhodobacter sphaeroides).